The following is a 181-amino-acid chain: Malignant T-cell-amplified sequence 2 (181 aa).

Residues 92–171 (LPHQQVDKGA…IGIENIHYLN (80 aa)) form the PUA domain.

Belongs to the MCTS1 family.

It localises to the cytoplasm. This is Malignant T-cell-amplified sequence 2 from Mus musculus (Mouse).